The following is a 361-amino-acid chain: Phosphoserine aminotransferase (361 aa).

Position 42 (Arg42) interacts with L-glutamate. Pyridoxal 5'-phosphate contacts are provided by residues 76 to 77 (AT), Trp102, Thr152, Asp172, and Gln195. Lys196 carries the N6-(pyridoxal phosphate)lysine modification. Residue 237–238 (NT) coordinates pyridoxal 5'-phosphate.

This sequence belongs to the class-V pyridoxal-phosphate-dependent aminotransferase family. SerC subfamily. As to quaternary structure, homodimer. It depends on pyridoxal 5'-phosphate as a cofactor.

Its subcellular location is the cytoplasm. The catalysed reaction is O-phospho-L-serine + 2-oxoglutarate = 3-phosphooxypyruvate + L-glutamate. It catalyses the reaction 4-(phosphooxy)-L-threonine + 2-oxoglutarate = (R)-3-hydroxy-2-oxo-4-phosphooxybutanoate + L-glutamate. It participates in amino-acid biosynthesis; L-serine biosynthesis; L-serine from 3-phospho-D-glycerate: step 2/3. Its pathway is cofactor biosynthesis; pyridoxine 5'-phosphate biosynthesis; pyridoxine 5'-phosphate from D-erythrose 4-phosphate: step 3/5. Catalyzes the reversible conversion of 3-phosphohydroxypyruvate to phosphoserine and of 3-hydroxy-2-oxo-4-phosphonooxybutanoate to phosphohydroxythreonine. The sequence is that of Phosphoserine aminotransferase from Xanthomonas euvesicatoria pv. vesicatoria (strain 85-10) (Xanthomonas campestris pv. vesicatoria).